A 316-amino-acid polypeptide reads, in one-letter code: Protoheme IX farnesyltransferase (316 aa).

The next 8 helical transmembrane spans lie at 35–55 (VMVL…GHVQ), 56–76 (PAIG…SGCL), 119–139 (VVLG…TIVF), 156–176 (IVIG…VVTG), 183–203 (LILF…LALI), 229–246 (IVWY…PVAL), 250–272 (GLVY…IRVL), and 283–303 (AAMG…SALL).

Belongs to the UbiA prenyltransferase family. Protoheme IX farnesyltransferase subfamily.

The protein resides in the cell inner membrane. It catalyses the reaction heme b + (2E,6E)-farnesyl diphosphate + H2O = Fe(II)-heme o + diphosphate. The protein operates within porphyrin-containing compound metabolism; heme O biosynthesis; heme O from protoheme: step 1/1. Functionally, converts heme B (protoheme IX) to heme O by substitution of the vinyl group on carbon 2 of heme B porphyrin ring with a hydroxyethyl farnesyl side group. The protein is Protoheme IX farnesyltransferase of Methylobacterium radiotolerans (strain ATCC 27329 / DSM 1819 / JCM 2831 / NBRC 15690 / NCIMB 10815 / 0-1).